The following is a 591-amino-acid chain: Aspartate--tRNA(Asp/Asn) ligase (591 aa).

Glutamate 176 is an L-aspartate binding site. Positions 200 to 203 (QLFK) are aspartate. Residue arginine 222 participates in L-aspartate binding. Residues 222–224 (RDE) and glutamine 231 contribute to the ATP site. Position 450 (histidine 450) interacts with L-aspartate. Glutamate 484 contacts ATP. Arginine 491 is an L-aspartate binding site. 536-539 (GLDR) is a binding site for ATP.

The protein belongs to the class-II aminoacyl-tRNA synthetase family. Type 1 subfamily. As to quaternary structure, homodimer.

It is found in the cytoplasm. The catalysed reaction is tRNA(Asx) + L-aspartate + ATP = L-aspartyl-tRNA(Asx) + AMP + diphosphate. Aspartyl-tRNA synthetase with relaxed tRNA specificity since it is able to aspartylate not only its cognate tRNA(Asp) but also tRNA(Asn). Reaction proceeds in two steps: L-aspartate is first activated by ATP to form Asp-AMP and then transferred to the acceptor end of tRNA(Asp/Asn). In Bacillus mycoides (strain KBAB4) (Bacillus weihenstephanensis), this protein is Aspartate--tRNA(Asp/Asn) ligase.